Reading from the N-terminus, the 453-residue chain is Exopolyphosphatase PRUNE1 (453 aa).

Residue M1 is modified to N-acetylmethionine. Mn(2+) contacts are provided by D28, D30, D106, and D179. The DHH motif motif lies at 106–108 (DHH). The interval 393–420 (SLLSGLSQDEEEPPLPPTPMNSLVDECP) is essential for homodimerization. Positions 396–419 (SGLSQDEEEPPLPPTPMNSLVDEC) are disordered. Residue S399 is modified to Phosphoserine. T410 carries the phosphothreonine modification. The residue at position 414 (S414) is a Phosphoserine.

It belongs to the PPase class C family. Prune subfamily. In terms of assembly, homooligomer. Able to homodimerize via its C-terminal domain. Interacts with NME1. Interacts with GSK3; at focal adhesion complexes where paxillin and vinculin are colocalized. Mn(2+) serves as cofactor.

It is found in the cytoplasm. Its subcellular location is the nucleus. The protein resides in the cell junction. The protein localises to the focal adhesion. It catalyses the reaction diphosphate + H2O = 2 phosphate + H(+). Its activity is regulated as follows. Activated by magnesium ions and inhibited by manganese ions. Inhibited by dipyridamole, moderately sensitive to IBMX and inhibited by vinpocetine. In terms of biological role, phosphodiesterase (PDE) that has higher activity toward cAMP than cGMP, as substrate. Plays a role in cell proliferation, is able to induce cell motility and acts as a negative regulator of NME1. The chain is Exopolyphosphatase PRUNE1 (PRUNE1) from Bos taurus (Bovine).